A 116-amino-acid polypeptide reads, in one-letter code: Staphylococcal complement inhibitor (116 aa).

Positions 1–31 (MKIRKSILAGTLAIVLASPLVTNLDKNEAQA) are cleaved as a signal peptide. An essential for activity region spans residues 62–79 (LATGSLNTYYKRTIKISG).

This sequence belongs to the SCIN family.

The protein resides in the secreted. Its function is as follows. Involved in countering the first line of host defense mechanisms. Efficiently inhibits opsonization, phagocytosis and killing of S.aureus by human neutrophils. Acts by binding and stabilizing human C3 convertases (C4b2a and C3bBb), leading to their inactivation. The convertases are no longer able to cleave complement C3, therefore preventing further C3b deposition on the bacterial surface and phagocytosis of the bacterium. Also prevents C5a-induced neutrophil responses. The sequence is that of Staphylococcal complement inhibitor (scn) from Staphylococcus aureus (strain Mu50 / ATCC 700699).